Consider the following 132-residue polypeptide: Fluoride-specific ion channel FluC 1 (132 aa).

Transmembrane regions (helical) follow at residues 9–29 (LAAVFAGGALGSLARAALSAL), 35–55 (ASWPWPTFTVNIVGAFLVGYF), 72–89 (LLGTGFCGGLTTFSTMQV), and 100–120 (WGLAAGYTLTSIAAGLLAVHL). 2 residues coordinate Na(+): Gly-79 and Thr-82.

It belongs to the fluoride channel Fluc/FEX (TC 1.A.43) family.

It is found in the cell membrane. It catalyses the reaction fluoride(in) = fluoride(out). Na(+) is not transported, but it plays an essential structural role and its presence is essential for fluoride channel function. Functionally, fluoride-specific ion channel. Important for reducing fluoride concentration in the cell, thus reducing its toxicity. This Mycolicibacterium paratuberculosis (strain ATCC BAA-968 / K-10) (Mycobacterium paratuberculosis) protein is Fluoride-specific ion channel FluC 1.